A 540-amino-acid polypeptide reads, in one-letter code: Chaperonin GroEL (540 aa).

Residues 29–32 (TLGP), 86–90 (DGTTT), G413, 476–478 (NAA), and D492 contribute to the ATP site.

The protein belongs to the chaperonin (HSP60) family. Forms a cylinder of 14 subunits composed of two heptameric rings stacked back-to-back. Interacts with the co-chaperonin GroES.

It is found in the cytoplasm. The catalysed reaction is ATP + H2O + a folded polypeptide = ADP + phosphate + an unfolded polypeptide.. Together with its co-chaperonin GroES, plays an essential role in assisting protein folding. The GroEL-GroES system forms a nano-cage that allows encapsulation of the non-native substrate proteins and provides a physical environment optimized to promote and accelerate protein folding. This is Chaperonin GroEL from Tsukamurella paurometabola (Corynebacterium paurometabolum).